The primary structure comprises 317 residues: Ferrochelatase (317 aa).

Residues histidine 191 and glutamate 271 each coordinate Fe cation.

Belongs to the ferrochelatase family.

The protein resides in the cytoplasm. It carries out the reaction heme b + 2 H(+) = protoporphyrin IX + Fe(2+). Its pathway is porphyrin-containing compound metabolism; protoheme biosynthesis; protoheme from protoporphyrin-IX: step 1/1. Its function is as follows. Catalyzes the ferrous insertion into protoporphyrin IX. The sequence is that of Ferrochelatase from Thermus thermophilus (strain ATCC BAA-163 / DSM 7039 / HB27).